The following is a 37-amino-acid chain: Esculentin-2L (37 aa).

Cysteine 31 and cysteine 37 are disulfide-bonded.

In terms of tissue distribution, expressed by the skin glands.

The protein resides in the secreted. Functionally, antibacterial activity against Gram-positive bacterium S.aureus and Gram-negative bacterium E.coli. Has activity against C.albicans. The polypeptide is Esculentin-2L (Rana luteiventris (Columbia spotted frog)).